We begin with the raw amino-acid sequence, 1238 residues long: MNPLLAPPYSGTLPFNSMDLSLQSARSAAQPLAKQPPNQQPHQTQQQQQSLIHAPNYPSIQNLTTNATPTSTQLQQQQQQEHLAAMAAAHVSLLQSSRQNQGAPSGNLSNGGDCESLLPPPPPTSVSGNTNHTGSNSSSNSGSNNHIASPHYMQSRDENFKLTQLKRSFEPDLSGKNPQKEKDFGYPSASSASKLPTHNVQQQHANKKPSPLRNYHQQQQPPYNLTPKYNGPQTPPTPQSPLAANPHQMLSPTMDYNQLHLHHQLNSSSGGSYQHMQQDQTQSQSHPQHLHYHNQHATSQTAPPPLLPPLLTSGQFHAQPQDASQQQTASSSQHQTHHSRTAQLTNLDQAVKHKPESEEQPVITDLSYRNSETDKTAANPVPEAPESPYLTTSNEESLESNSNSSNSRKRRKRKASMVMRVTPNENAPEGENSKPQHPQQAANLNNSCSPKKSPKNGGGEFQPFSTQKQSQTENEKTTQENGRGGSPAPAENNSNSNSSTLYNDNENPKTKKQRQALLQRNLTEQHRMQQDDEPPKNHTSPAMPPPSPQSNSSSSSSSSSSANTHSSQSSHAVNNIPKPEINNKATTDTPASPALVEQGDIDAKPAVSVHECDEEEEPAVNKVSPAHPDPPTTAAVAAPPATESPKKSSPAANSESCPFGEVEDKLEQMFAGIEEETERISSPEKPAEESAAMVAHNLTAQLALDPSKTLDTPAENQTSVLAVLAPNQTPTPEIRPVATKAAMKSTMPSPVHSPIPQSRSTSTPLVAGDDSKSNTPVPAKAPAPRRPPPRRLSMGMDASLLRFMIDDPPAKKPGRKKKVTKEPDFEDDDKPSTSAAAAAALAARQLSEAASATKSKPAAGAKKKNAGVKGKKGSAGKGNAKNAKQNGKKSARKPAFTTDEDSTPAPTNGGGSVPELRFKSPFILIKPDGSVSIKNTHSAEDVNEKQTKVKKAPHERKNLRGMHSSTLSNRYDADTTDSTWICVFCKRGPHKLGLGDLFGPYLVTSDCDEYRAAVQTPGAQDIDGMFVNKRRREDMVKGQERNLPAVPATLANIMQAPKISMHKRKRKQTHDSSISYSDDPNESRSQCSSVDLLDCSTESKFVETFRGMGKTSENGFEVWLHEDCAVWSNDIHLIGAHVNGLDAAVWDSTRYQCVLCQQTGASICCFQRCCKAAAHVPCGRSANWSLSEEDRKVYCHLHRHEPGVVEPIKTESIAPVEVSVATPPAPAPPPAFNIHSLP.

Disordered regions lie at residues 22–83 (LQSA…QEHL), 96–150 (SSRQ…IASP), 169–250 (FEPD…HQML), 264–694 (QLNS…AAMV), 739–915 (TKAA…SVPE), 936–955 (THSA…APHE), and 1057–1089 (PKIS…QCSS). Low complexity predominate over residues 35-49 (QPPNQQPHQTQQQQQ). Polar residues predominate over residues 58 to 72 (PSIQNLTTNATPTST). Over residues 73-83 (QLQQQQQQEHL) the composition is skewed to low complexity. Over residues 96 to 110 (SSRQNQGAPSGNLSN) the composition is skewed to polar residues. The segment covering 125–145 (SVSGNTNHTGSNSSSNSGSNN) has biased composition (low complexity). Over residues 188-204 (SASSASKLPTHNVQQQH) the composition is skewed to polar residues. Composition is skewed to low complexity over residues 272–287 (SYQH…QSHP), 309–334 (PLLT…SSQH), and 393–406 (SNEE…NSSN). Residues 433–450 (SKPQHPQQAANLNNSCSP) show a composition bias toward polar residues. Ser-453 bears the Phosphoserine mark. Polar residues predominate over residues 463 to 472 (PFSTQKQSQT). Positions 523-536 (TEQHRMQQDDEPPK) are enriched in basic and acidic residues. 2 stretches are compositionally biased toward low complexity: residues 549–570 (QSNS…SQSS) and 632–641 (TTAAVAAPPA). The residue at position 642 (Thr-642) is a Phosphothreonine. The segment covering 678-688 (ERISSPEKPAE) has biased composition (basic and acidic residues). Phosphoserine occurs at positions 682, 749, and 753. A compositionally biased stretch (polar residues) spans 755 to 764 (IPQSRSTSTP). Phosphoserine is present on residues Ser-793 and Ser-799. The segment covering 832–860 (STSAAAAAALAARQLSEAASATKSKPAAG) has biased composition (low complexity). A compositionally biased stretch (basic residues) spans 861–874 (AKKKNAGVKGKKGS). A compositionally biased stretch (basic and acidic residues) spans 937–947 (HSAEDVNEKQT). Polar residues predominate over residues 1071–1089 (DSSISYSDDPNESRSQCSS). The C2HC pre-PHD-type; degenerate zinc-finger motif lies at 1089 to 1131 (SVDLLDCSTESKFVETFRGMGKTSENGFEVWLHEDCAVWSNDI). Residue Ser-1099 is modified to Phosphoserine. A PHD-type zinc finger spans residues 1151–1199 (YQCVLCQQTGASICCFQRCCKAAAHVPCGRSANWSLSEEDRKVYCHLHR).

This is an uncharacterized protein from Drosophila melanogaster (Fruit fly).